A 448-amino-acid chain; its full sequence is UDP-N-acetylglucosamine--dolichyl-phosphate N-acetylglucosaminephosphotransferase (448 aa).

A helical transmembrane segment spans residues 24–44 (ALVAAVGFGIAGYLATDMLIP). UDP-N-acetyl-alpha-D-glucosamine contacts are provided by residues 58 to 60 (KDL) and Glu70. 2 helical membrane-spanning segments follow: residues 72 to 92 (IGAI…PFIF) and 129 to 149 (YLSA…DDLF). Lys156 lines the dolichyl phosphate pocket. The next 2 helical transmembrane spans lie at 157–177 (FFLP…DFGV) and 202–222 (YVYM…LAGV). 210–218 (IFCPNSINI) contacts dolichyl phosphate. A Mg(2+)-binding site is contributed by Asn217. Asn223 serves as a coordination point for UDP-N-acetyl-alpha-D-glucosamine. 4 helical membrane-spanning segments follow: residues 231–251 (IVLA…GPLA), 256–276 (HRFS…LWKW), 283–303 (VFVG…VGIL), and 309–329 (TMLL…PQLF). Asp287 is a binding site for Mg(2+). Residue 336–338 (RHR) coordinates UDP-N-acetyl-alpha-D-glucosamine. 2 helical membrane-spanning segments follow: residues 387–407 (EIIS…FGPM) and 419–439 (LQFC…AIIF).

It belongs to the glycosyltransferase 4 family. Mg(2+) serves as cofactor.

Its subcellular location is the endoplasmic reticulum membrane. It catalyses the reaction a di-trans,poly-cis-dolichyl phosphate + UDP-N-acetyl-alpha-D-glucosamine = an N-acetyl-alpha-D-glucosaminyl-diphospho-di-trans,poly-cis-dolichol + UMP. It participates in protein modification; protein glycosylation. Its activity is regulated as follows. Inhibited by natural nucleoside antibiotic tunicamycin, which acts as a structural analog and competitor of UDP-GlcNAc. Its function is as follows. UDP-N-acetylglucosamine--dolichyl-phosphate N-acetylglucosaminephosphotransferase that operates in the biosynthetic pathway of dolichol-linked oligosaccharides, the glycan precursors employed in protein asparagine (N)-glycosylation. The assembly of dolichol-linked oligosaccharides begins on the cytosolic side of the endoplasmic reticulum membrane and finishes in its lumen. The sequential addition of sugars to dolichol pyrophosphate produces dolichol-linked oligosaccharides containing fourteen sugars, including two GlcNAcs, nine mannoses and three glucoses. Once assembled, the oligosaccharide is transferred from the lipid to nascent proteins by oligosaccharyltransferases. Catalyzes the initial step of dolichol-linked oligosaccharide biosynthesis, transfering GlcNAc-1-P from cytosolic UDP-GlcNAc onto the carrier lipid dolichyl phosphate (P-dolichol), yielding GlcNAc-P-P-dolichol embedded in the cytoplasmic leaflet of the endoplasmic reticulum membrane. The sequence is that of UDP-N-acetylglucosamine--dolichyl-phosphate N-acetylglucosaminephosphotransferase (ALG7) from Saccharomyces cerevisiae (strain ATCC 204508 / S288c) (Baker's yeast).